A 248-amino-acid chain; its full sequence is Probable transcriptional regulatory protein Mrad2831_3553 (248 aa).

The protein belongs to the TACO1 family.

It is found in the cytoplasm. The chain is Probable transcriptional regulatory protein Mrad2831_3553 from Methylobacterium radiotolerans (strain ATCC 27329 / DSM 1819 / JCM 2831 / NBRC 15690 / NCIMB 10815 / 0-1).